Consider the following 241-residue polypeptide: Lipopolysaccharide export system ATP-binding protein LptB (241 aa).

The 233-residue stretch at 5–237 (LQAQSLFKSY…PMVRQVYLGD (233 aa)) folds into the ABC transporter domain. Position 37-44 (37-44 (GPNGAGKT)) interacts with ATP.

The protein belongs to the ABC transporter superfamily. Outer membrane lipopolysaccharide export (TC 1.B.42) family. Component of the lipopolysaccharide transport and assembly complex. The LptBFG transporter is composed of two ATP-binding proteins (LptB) and two transmembrane proteins (LptF and LptG).

Its subcellular location is the cytoplasm. The protein resides in the cell inner membrane. Part of the ABC transporter complex LptBFG involved in the translocation of lipopolysaccharide (LPS) from the inner membrane to the outer membrane. Probably responsible for energy coupling to the transport system. This Acidithiobacillus ferridurans protein is Lipopolysaccharide export system ATP-binding protein LptB (lptB).